A 20-amino-acid polypeptide reads, in one-letter code: FFPIILGLVPKLVCLITKKC.

Cys-14 and Cys-20 are disulfide-bonded.

As to expression, expressed by the skin glands.

The protein resides in the secreted. In terms of biological role, antimicrobial peptide. The polypeptide is Brevinin-1LT (Rana latastei (Italian agile frog)).